A 175-amino-acid polypeptide reads, in one-letter code: MAKADKATAVADIAEQFKASTATVVTEYRGLTVANLAELRRALGDSATYTVAKNTLVKRAASEAGIEGLDELFAGPTAIAFVKGEAVDAAKAIKKFAKDNKALVIKGGYMDGKALSVADVEKIADLESREVLLAKLAGAMKGNLSKAAGLFNAPASQVARLAAALQEKKAGEEAA.

Belongs to the universal ribosomal protein uL10 family. As to quaternary structure, part of the ribosomal stalk of the 50S ribosomal subunit. The N-terminus interacts with L11 and the large rRNA to form the base of the stalk. The C-terminus forms an elongated spine to which L12 dimers bind in a sequential fashion forming a multimeric L10(L12)X complex.

Forms part of the ribosomal stalk, playing a central role in the interaction of the ribosome with GTP-bound translation factors. This Mycolicibacterium smegmatis (strain ATCC 700084 / mc(2)155) (Mycobacterium smegmatis) protein is Large ribosomal subunit protein uL10.